We begin with the raw amino-acid sequence, 290 residues long: Ig delta chain C region membrane-bound form (290 aa).

Positions 5-105 constitute an Ig-like 1 domain; the sequence is PDMFLLSECK…WDSQSSKRVT (101 aa). A disulfide bridge connects residues Cys-26 and Cys-78. Residues Asn-58 and Asn-75 are each glycosylated (N-linked (GlcNAc...) asparagine). Residues 89 to 111 are disordered; sequence PFKFPESWDSQSSKRVTPTLQAK. Residues 96–111 are compositionally biased toward polar residues; sequence WDSQSSKRVTPTLQAK. Residues Asn-112, Asn-135, and Asn-227 are each glycosylated (N-linked (GlcNAc...) asparagine). Residues 133-233 enclose the Ig-like 2 domain; it reads PSNLTVNILT…TKLNASKSLA (101 aa). A helical transmembrane segment spans residues 262-279; sequence GLWPTMCTFVALFLLTLL. The Cytoplasmic segment spans residues 280–290; that stretch reads YSGFVTFIKVK.

In terms of tissue distribution, cell lines producing IgD contain several mRNA species for Ig delta chains. In plasmacytomas, the secreted form is the major component, and the membrane-bound form is a minor component. In spleen, however, the membrane-bound form is the major component. These two forms differ in their C-terminal segments.

It localises to the cell membrane. This chain is Ig delta chain C region membrane-bound form, found in Mus musculus (Mouse).